A 180-amino-acid polypeptide reads, in one-letter code: Dual-action ribosomal maturation protein DarP (180 aa).

The protein belongs to the DarP family.

It localises to the cytoplasm. Member of a network of 50S ribosomal subunit biogenesis factors which assembles along the 30S-50S interface, preventing incorrect 23S rRNA structures from forming. Promotes peptidyl transferase center (PTC) maturation. This Pasteurella multocida (strain Pm70) protein is Dual-action ribosomal maturation protein DarP.